Reading from the N-terminus, the 1039-residue chain is Protein male-specific lethal-1 (1039 aa).

The span at 1–13 (MDKRFKWPPKKRA) shows a compositional bias: basic residues. Disordered regions lie at residues 1–44 (MDKR…HLHQ) and 171–199 (RRKN…QKLI). Phosphoserine is present on serine 18. Serine 238 carries the phosphoserine modification. Disordered regions lie at residues 244–266 (HAGA…GEFN), 358–454 (GQSV…GNQN), 485–691 (KKDK…EIDV), and 729–799 (IYPP…SSTT). Residues 255–266 (KRSESKGRGEFN) are compositionally biased toward basic and acidic residues. Positions 368-392 (EEDDDEDDEDDENSDKDDDSEEDDY) are enriched in acidic residues. The segment covering 397-407 (SDADVNARTEE) has biased composition (basic and acidic residues). Residues 431–445 (AHSTPNHQQKSSTQA) show a composition bias toward polar residues. At serine 433 the chain carries Phosphoserine. Position 434 is a phosphothreonine (threonine 434). Phosphoserine is present on residues serine 492 and serine 496. Basic and acidic residues-rich tracts occupy residues 504–515 (PHQEDAIVDHNA) and 523–570 (PKPD…DAPK). 2 stretches are compositionally biased toward polar residues: residues 581 to 592 (TKTSSRESTLPK) and 609 to 625 (NHQS…TQRL). At serine 585 the chain carries Phosphoserine. A Phosphothreonine modification is found at threonine 659. Phosphoserine is present on residues serine 682 and serine 684. Threonine 747 carries the post-translational modification Phosphothreonine. Serine 749 carries the phosphoserine modification. Phosphothreonine occurs at positions 750, 751, and 753. Over residues 759-768 (QHAVTSSMDQ) the composition is skewed to polar residues. A phosphoserine mark is found at serine 764 and serine 765. At threonine 788 the chain carries Phosphothreonine. Residue serine 810 is modified to Phosphoserine. Threonine 813 and threonine 832 each carry phosphothreonine. A PEHE domain is found at 865-983 (SLEIPKWRDV…EARDDFGVPW (119 aa)). A phosphoserine mark is found at serine 879 and serine 889. Residues 886 to 904 (ELLSDATFERRHQKYVKDE) form an interaction with mof HAT domain region. A disordered region spans residues 1011–1039 (IPTTAAEARHQENHSSYVFPKRRKRQKNR). Threonine 1014 is subject to Phosphothreonine. At serine 1025 the chain carries Phosphoserine. Residues 1030–1039 (PKRRKRQKNR) are compositionally biased toward basic residues. The Nuclear localization signal signature appears at 1032-1037 (RRKRQK).

Belongs to the msl-1 family. As to quaternary structure, component of the male-specific lethal (MSL) histone acetyltransferase complex, composed of mof, mle, msl-1, msl-2 and msl-3 proteins, as well as roX1 and roX2 non-coding RNAs. Interacts (via PEHE domain) with mof (via HAT domain) and msl-3 (via MRG domain); both interactions are direct. Interacts with tamo via the nuclear localization signal. Component of a maternal MSL subcomplex composed of mof, msl-1 and msl-3. In terms of processing, phosphorylation at Ser-18, Thr743, Thr-747 and Thr-751 is required to promote phosphorylation of 'Ser-5' of the C-terminal heptapeptide repeat domain (CTD) of the largest RNA polymerase II subunit Polr2A. Phosphorylated by Cdk7 in vitro. In contrast, phosphorylation at Ser-18, Thr743, Thr-747 and Thr-751 does not affect its role in dosage compensation in males. Ubiquitinated by msl-2.

It localises to the nucleus. It is found in the chromosome. Its function is as follows. Component of the male-specific lethal (MSL) histone acetyltransferase complex, a multiprotein complex essential for elevating transcription of the single X chromosome in the male (X chromosome dosage compensation). The MSL complex specifically associates with the single X chromosome in males and mediates formation of H4K16ac, promoting a two-fold activation of X chromosome. In complex with msl-2, promotes ubiquitination of histone H2B. In addition to its role in dosage compensation in males, regulates the activity of gene promoters: acts together with Cdk7 to promote phosphorylation of 'Ser-5' of the C-terminal heptapeptide repeat domain (CTD) of the largest RNA polymerase II subunit Polr2A. The sequence is that of Protein male-specific lethal-1 from Drosophila melanogaster (Fruit fly).